The following is a 445-amino-acid chain: Xylose isomerase (445 aa).

Active-site residues include H99 and D102. Mg(2+) is bound by residues E230, E266, H269, D294, D305, D307, and D337.

This sequence belongs to the xylose isomerase family. As to quaternary structure, homotetramer. It depends on Mg(2+) as a cofactor.

It localises to the cytoplasm. It carries out the reaction alpha-D-xylose = alpha-D-xylulofuranose. The polypeptide is Xylose isomerase (Geobacillus kaustophilus (strain HTA426)).